Reading from the N-terminus, the 365-residue chain is Probable L-tyrosine/L-aspartate decarboxylase (365 aa).

The residue at position 224 (K224) is an N6-(pyridoxal phosphate)lysine.

It belongs to the group II decarboxylase family. MfnA subfamily. It depends on pyridoxal 5'-phosphate as a cofactor.

It carries out the reaction L-tyrosine + H(+) = tyramine + CO2. It catalyses the reaction L-aspartate + H(+) = beta-alanine + CO2. It participates in cofactor biosynthesis; methanofuran biosynthesis. The protein operates within cofactor biosynthesis; coenzyme A biosynthesis. Catalyzes the decarboxylation of L-tyrosine to produce tyramine for methanofuran biosynthesis. Can also catalyze the decarboxylation of L-aspartate to produce beta-alanine for coenzyme A (CoA) biosynthesis. This is Probable L-tyrosine/L-aspartate decarboxylase from Methanoculleus marisnigri (strain ATCC 35101 / DSM 1498 / JR1).